Here is a 212-residue protein sequence, read N- to C-terminus: Uracil phosphoribosyltransferase (212 aa).

5-phospho-alpha-D-ribose 1-diphosphate contacts are provided by residues Arg-78, Arg-103, and 130–138 (DPMLATGSS). Uracil contacts are provided by residues Ile-193 and 198 to 200 (GDA). Asp-199 contributes to the 5-phospho-alpha-D-ribose 1-diphosphate binding site.

It belongs to the UPRTase family. The cofactor is Mg(2+).

The catalysed reaction is UMP + diphosphate = 5-phospho-alpha-D-ribose 1-diphosphate + uracil. It participates in pyrimidine metabolism; UMP biosynthesis via salvage pathway; UMP from uracil: step 1/1. Its activity is regulated as follows. Allosterically activated by GTP. Catalyzes the conversion of uracil and 5-phospho-alpha-D-ribose 1-diphosphate (PRPP) to UMP and diphosphate. The protein is Uracil phosphoribosyltransferase of Pseudomonas fluorescens (strain Pf0-1).